A 230-amino-acid chain; its full sequence is uncharacterized protein (230 aa).

The protein to E.coli HemX N-terminal region.

This is an uncharacterized protein from Haemophilus influenzae (strain ATCC 51907 / DSM 11121 / KW20 / Rd).